A 201-amino-acid chain; its full sequence is MICOS complex subunit MIC27 (201 aa).

The N-terminal 31 residues, 1–31 (MTQDKPIVETISNAGEQVTNVFGQFWQLVTS), are a transit peptide targeting the mitochondrion. The Cytoplasmic segment spans residues 32 to 117 (KNTTNNGDSK…KCNAYLTEEW (86 aa)). The helical transmembrane segment at 118–138 (TALPKAAAITVGGMAGFVLGL) threads the bilayer. Over 139 to 145 (KRGPVGR) the chain is Mitochondrial intermembrane. Residues 146–166 (LLTTTIGLATMAAFCYPIEAV) traverse the membrane as a helical segment. The Cytoplasmic segment spans residues 167 to 201 (DVAKTGRAHAEQTWYSFQESPTPSAIVKTNLSPPK).

It belongs to the apolipoprotein O/MICOS complex subunit Mic27 family. Component of the mitochondrial contact site and cristae organizing system (MICOS) complex.

It is found in the mitochondrion outer membrane. Sustains mitochondrial morphology probably through maintaining cristae morphology. May act as a component of the MICOS complex, a large protein complex of the mitochondria. This is MICOS complex subunit MIC27 from Caenorhabditis elegans.